The primary structure comprises 260 residues: Indole-3-glycerol phosphate synthase (260 aa).

It belongs to the TrpC family.

The catalysed reaction is 1-(2-carboxyphenylamino)-1-deoxy-D-ribulose 5-phosphate + H(+) = (1S,2R)-1-C-(indol-3-yl)glycerol 3-phosphate + CO2 + H2O. The protein operates within amino-acid biosynthesis; L-tryptophan biosynthesis; L-tryptophan from chorismate: step 4/5. The polypeptide is Indole-3-glycerol phosphate synthase (Neisseria meningitidis serogroup C / serotype 2a (strain ATCC 700532 / DSM 15464 / FAM18)).